The following is a 574-amino-acid chain: K(+)/H(+) antiporter NhaP2 (574 aa).

The next 13 membrane-spanning stretches (helical) occupy residues 6–26 (INSF…LSPV), 34–54 (ILLI…GGIL), 58–78 (YSTA…DGGM), 87–107 (VALW…TSIT), 109–129 (VMAA…GAIV), 173–193 (IAIL…ISFI), 196–216 (FGLG…LVNL), 219–239 (LAEG…YAAS), 242–262 (LGGS…NKPT), 271–291 (VLDG…GLLL), 299–319 (IWLP…PLAV), 335–355 (WFIS…VFPM), and 359–379 (LPGA…SLLV). The 82-residue stretch at 405-486 (SGVEIYPSSE…LEALSNLFSQ (82 aa)) folds into the RCK C-terminal domain.

This sequence belongs to the monovalent cation:proton antiporter 1 (CPA1) transporter (TC 2.A.36) family. NhaP2 subfamily.

The protein localises to the cell inner membrane. The catalysed reaction is K(+)(in) + H(+)(out) = K(+)(out) + H(+)(in). In terms of biological role, k(+)/H(+) antiporter that extrudes potassium in exchange for external protons and maintains the internal concentration of potassium under toxic levels. The polypeptide is K(+)/H(+) antiporter NhaP2 (Shewanella sp. (strain ANA-3)).